Here is a 207-residue protein sequence, read N- to C-terminus: Cytidylate kinase (207 aa).

ATP is bound at residue 7–15 (GVAASGKSS).

It belongs to the cytidylate kinase family. Type 1 subfamily.

The protein resides in the cytoplasm. The catalysed reaction is CMP + ATP = CDP + ADP. The enzyme catalyses dCMP + ATP = dCDP + ADP. The protein is Cytidylate kinase of Deinococcus deserti (strain DSM 17065 / CIP 109153 / LMG 22923 / VCD115).